We begin with the raw amino-acid sequence, 232 residues long: Chalcone--flavanone isomerase (232 aa).

2 residues coordinate substrate: Thr50 and Ser192.

This sequence belongs to the chalcone isomerase family.

The enzyme catalyses a chalcone = a flavanone.. Its pathway is secondary metabolite biosynthesis; flavonoid biosynthesis. Functionally, catalyzes the intramolecular cyclization of bicyclic chalcones into tricyclic (S)-flavanones. Responsible for the isomerization of 4,2',4',6'-tetrahydroxychalcone (also termed chalcone) into naringenin. The polypeptide is Chalcone--flavanone isomerase (CHI) (Saussurea medusa (Saw-wort)).